The chain runs to 116 residues: NADH-ubiquinone oxidoreductase chain 3 (116 aa).

Helical transmembrane passes span 4-24 (IIFLFSITIAVAVVLGLAAHA), 56-76 (FFLVAILFLLFDLEIALLFPL), and 88-108 (LIPISMVFMVILTLGLVFEWI).

It belongs to the complex I subunit 3 family.

It is found in the mitochondrion membrane. It carries out the reaction a ubiquinone + NADH + 5 H(+)(in) = a ubiquinol + NAD(+) + 4 H(+)(out). In terms of biological role, core subunit of the mitochondrial membrane respiratory chain NADH dehydrogenase (Complex I) that is believed to belong to the minimal assembly required for catalysis. Complex I functions in the transfer of electrons from NADH to the respiratory chain. The immediate electron acceptor for the enzyme is believed to be ubiquinone. This Strongylocentrotus purpuratus (Purple sea urchin) protein is NADH-ubiquinone oxidoreductase chain 3 (ND3).